Consider the following 577-residue polypeptide: Arginine--tRNA ligase (577 aa).

The 'HIGH' region signature appears at 122 to 132 (PNVAKEMHVGH).

This sequence belongs to the class-I aminoacyl-tRNA synthetase family. Monomer.

It localises to the cytoplasm. The enzyme catalyses tRNA(Arg) + L-arginine + ATP = L-arginyl-tRNA(Arg) + AMP + diphosphate. In Escherichia coli O9:H4 (strain HS), this protein is Arginine--tRNA ligase.